The following is a 1316-amino-acid chain: Tetratricopeptide repeat protein 21B (1316 aa).

TPR repeat units lie at residues 108–141 (EKALYHAGLFLWHIGRHDKAREYIDRMIKISDGS), 145–178 (HVLKAWLDITRGKEPYTKKALKYFEEGLQDGNDT), 180–211 (ALLGKAQCLEMRQNYSGALETVNQIIVNFPSF), 285–323 (AQLFYNITLAFSRTCGRSQLILQKIQTLLERAFSLNPQQ), 324–357 (SEFATELGYQMILQGRVKEALKWYKTAMTLDETS), 492–525 (LQTVFLIAKVKYLSGDIEAAFNNLQHCLEHNPSY), 563–596 (PLYHLIKAQSQKKMGEIADAIKTLHMAMSLPGMK), 617–650 (LSIFLELIDVHRLNGEQHEATKVLQDAIHEFSGT), 722–755 (PRSFLLLGDAYMNILEPEEAIVAYEQALNQNPKD), 757–789 (TLASKMGKALIKTHNYSMAITYYEAALKTGQKN), 791–822 (LCYDLAELLLKLKWYDKAEKVLQHALAHEPVN), 831–864 (GRCQVLLAKVYSKMEKLGDAITALQQARELQARV), 884–917 (AEICAEIAKHSVAQRDYEKAIKFYREALVHCETD), 919–951 (KIMLELARLYLAQDDPDSCLRQCALLLQSDQDN), 952–985 (EAATMMMADLMFRKQDYEQAVFHLQQLLERKPDN), 1023–1056 (PGFQYCKGLYLWYTGEPNDALRHFNKARKDRDWG), 1197–1230 (EKSWLLLADIYIQSAKYDMAEDLLKRCLRHNRSC), 1232–1264 (KAYEYMGYIMEKEQAYTDAALNYEMAWKYSNRT), and 1266–1299 (PAVGYKLAFNYLKAKRYVDSIDICHQVLEAHPTY).

Belongs to the TTC21 family. As to quaternary structure, component of the IFT complex A (IFT-A) complex. IFT-A complex is divided into a core subcomplex composed of IFT122:IFT140:WDR19 which is associated with TULP3 and a peripheral subcomplex composed of IFT43:WDR35:TTC21B. Interacts directy with WDR35 and TTC21B. Interacts with TTC25.

It is found in the cytoplasm. It localises to the cytoskeleton. The protein resides in the cilium axoneme. Component of the IFT complex A (IFT-A), a complex required for retrograde ciliary transport and entry into cilia of G protein-coupled receptors (GPCRs). Essential for retrograde trafficking of IFT-1, IFT-B and GPCRs. Negatively modulates the SHH signal transduction. The polypeptide is Tetratricopeptide repeat protein 21B (Homo sapiens (Human)).